The following is a 788-amino-acid chain: Ribonucleoside-diphosphate reductase large subunit (788 aa).

In terms of domain architecture, ATP-cone spans 7–98 (TYVVKRDGRK…VSNLHKKTNK (92 aa)). Residues 11–12 (KR), 17–23 (EDVHFDK), threonine 59, and aspartate 63 each bind ATP. Positions 208 and 223 each coordinate GDP. A disulfide bridge connects residues cysteine 224 and cysteine 450. Residues 232–234 (DSI), lysine 249, arginine 262, and 269–270 (AG) contribute to the dTTP site. Asparagine 433 provides a ligand contact to GDP. Residue asparagine 433 is the Proton acceptor of the active site. The active-site Cysteine radical intermediate is the cysteine 435. GDP contacts are provided by residues glutamate 437 and 610 to 613 (TAST). The active-site Proton acceptor is the glutamate 437.

This sequence belongs to the ribonucleoside diphosphate reductase large chain family. In terms of assembly, heterodimer of a large and a small subunit.

The catalysed reaction is a 2'-deoxyribonucleoside 5'-diphosphate + [thioredoxin]-disulfide + H2O = a ribonucleoside 5'-diphosphate + [thioredoxin]-dithiol. Its activity is regulated as follows. Under complex allosteric control mediated by deoxynucleoside triphosphates and ATP binding to separate specificity and activation sites on the large subunit. The type of nucleotide bound at the specificity site determines substrate preference. It seems probable that ATP makes the enzyme reduce CDP and UDP, dGTP favors ADP reduction and dTTP favors GDP reduction. Stimulated by ATP and inhibited by dATP binding to the activity site. Its function is as follows. Provides the precursors necessary for DNA synthesis. Catalyzes the biosynthesis of deoxyribonucleotides from the corresponding ribonucleotides. The sequence is that of Ribonucleoside-diphosphate reductase large subunit (rnr-1) from Caenorhabditis elegans.